We begin with the raw amino-acid sequence, 790 residues long: Kinesin-like protein KIF9 (790 aa).

The Kinesin motor domain maps to 6–340 (KVHAFVRVKP…LRFASRMKLV (335 aa)). Residues 12–14 (RVK) and 93–100 (GQTGAGKT) contribute to the ATP site. Residues 342-380 (TEPAINEKYDAERMVKNLEKELALLKQELAIHDSLTNRT) are a coiled coil. Positions 477–578 (QNFGLGVAPF…IRPDTPPSKP (102 aa)) are disordered. The segment covering 525 to 534 (VSTSKTQLVP) has biased composition (polar residues). T530 is subject to Phosphothreonine. 2 stretches are compositionally biased toward basic and acidic residues: residues 537 to 552 (KDGDVKDMLSRDRETS) and 561 to 570 (SPKEELRPIR). S546 bears the Phosphoserine mark. Positions 658–690 (LLILKLKDLKKQYRSEYQDLRDLRAEIQYCQHL) form a coiled coil.

It belongs to the TRAFAC class myosin-kinesin ATPase superfamily. Kinesin family. In terms of assembly, interacts with HYDIN.

Its subcellular location is the cytoplasm. It is found in the cytoskeleton. It localises to the cell projection. The protein resides in the cilium. The protein localises to the flagellum. Its subcellular location is the flagellum axoneme. Essential for normal male fertility and for progressive motility of spermatozoa. This Homo sapiens (Human) protein is Kinesin-like protein KIF9 (KIF9).